Here is a 471-residue protein sequence, read N- to C-terminus: Steroid C26-monooxygenase (471 aa).

Residue glycine 238 coordinates substrate. Cysteine 412 is a binding site for heme.

It belongs to the cytochrome P450 family. Requires heme as cofactor.

It catalyses the reaction cholest-4-en-3-one + 6 reduced [2Fe-2S]-[ferredoxin] + 3 O2 + 5 H(+) = (25S)-3-oxocholest-4-en-26-oate + 6 oxidized [2Fe-2S]-[ferredoxin] + 4 H2O. Involved in the utilization of cholesterol as the sole carbon and energy source by degrading the side chain. Primarily catalyzes the sequential oxidation of the terminal methyl of cholest-4-en-3-one into (25S)-26-hydroxycholest-4-en-3-one (alcohol), (25S)-26-oxocholest-4-en-3-one (aldehyde), to finally yield the carboxylic acid (25S)-3-oxocholest-4-en-26-oate. Also able to sequentially oxidize cholesterol itself, not only cholest-4-en-3-one. In Rhodococcus jostii (strain RHA1), this protein is Steroid C26-monooxygenase (cyp125).